Reading from the N-terminus, the 65-residue chain is Double gene block protein 1 (65 aa).

Positions 1-41 (MDSQRTVELTNPRGRSKERGDSGGKQKNSMGRKIANDAISE) are disordered. The span at 15–24 (RSKERGDSGG) shows a compositional bias: basic and acidic residues. The segment at 17–43 (KERGDSGGKQKNSMGRKIANDAISESK) is RNA-binding.

This sequence belongs to the carmovirus double gene block protein 1 family. In terms of assembly, homodimer.

Cell-to-cell movement. Displays RNA-binding activity. In Melon necrotic spot virus (MNSV), this protein is Double gene block protein 1.